Consider the following 280-residue polypeptide: Diaminopimelate epimerase (280 aa).

Positions 13 and 64 each coordinate substrate. The active-site Proton donor is cysteine 73. Residues 74–75, asparagine 164, asparagine 197, and 215–216 contribute to the substrate site; these read GN and ER. Cysteine 224 acts as the Proton acceptor in catalysis. 225 to 226 serves as a coordination point for substrate; it reads GT.

Belongs to the diaminopimelate epimerase family. Homodimer.

It is found in the cytoplasm. The catalysed reaction is (2S,6S)-2,6-diaminopimelate = meso-2,6-diaminopimelate. It participates in amino-acid biosynthesis; L-lysine biosynthesis via DAP pathway; DL-2,6-diaminopimelate from LL-2,6-diaminopimelate: step 1/1. In terms of biological role, catalyzes the stereoinversion of LL-2,6-diaminopimelate (L,L-DAP) to meso-diaminopimelate (meso-DAP), a precursor of L-lysine and an essential component of the bacterial peptidoglycan. In Leptospira biflexa serovar Patoc (strain Patoc 1 / Ames), this protein is Diaminopimelate epimerase.